The primary structure comprises 308 residues: Testis-specific Y-encoded protein 3 (308 aa).

This sequence belongs to the nucleosome assembly protein (NAP) family.

It localises to the cytoplasm. The protein localises to the nucleus. Functionally, may be involved in sperm differentiation and proliferation. This Homo sapiens (Human) protein is Testis-specific Y-encoded protein 3 (TSPY3).